We begin with the raw amino-acid sequence, 376 residues long: Thymidine kinase (376 aa).

The interval 1-39 is disordered; sequence MASYPCHQHASAFDQAARSRGHSNRRTALRPRRQQEATE. Residues 19–32 are compositionally biased toward basic residues; it reads SRGHSNRRTALRPR. 56–63 serves as a coordination point for ATP; that stretch reads GPHGMGKT. E83 functions as the Proton acceptor in the catalytic mechanism. Substrate-binding residues include Y101 and Q125. R216 provides a ligand contact to ATP. R222 is a binding site for substrate. Positions 260–280 are disordered; it reads GQLSGTAVPPQGAEPQSNAGP.

It belongs to the herpesviridae thymidine kinase family. In terms of assembly, homodimer.

The catalysed reaction is thymidine + ATP = dTMP + ADP + H(+). Catalyzes the transfer of the gamma-phospho group of ATP to thymidine to generate dTMP in the salvage pathway of pyrimidine synthesis. The dTMP serves as a substrate for DNA polymerase during viral DNA replication. Allows the virus to be reactivated and to grow in non-proliferative cells lacking a high concentration of phosphorylated nucleic acid precursors. This Homo sapiens (Human) protein is Thymidine kinase.